We begin with the raw amino-acid sequence, 166 residues long: Plastocyanin, chloroplastic (166 aa).

Residues 1-67 (MASLTSAAVT…GAVLASNALA (67 aa)) constitute a chloroplast transit peptide. A Plastocyanin-like domain is found at 68–166 (VEVLLGGSDG…AGMAGKITVN (99 aa)). Residues H104, C151, H154, and M159 each coordinate Cu cation.

Belongs to the plastocyanin family. Cu(2+) is required as a cofactor.

It localises to the plastid. The protein resides in the chloroplast thylakoid membrane. Its function is as follows. Participates in electron transfer between P700 and the cytochrome b6-f complex in photosystem I. The protein is Plastocyanin, chloroplastic (PETE) of Fritillaria agrestis (Stinkbells).